The primary structure comprises 61 residues: Potassium channel toxin alpha-KTx 18.1 (61 aa).

The first 24 residues, Met1–Val24, serve as a signal peptide directing secretion. 3 disulfides stabilise this stretch: Cys33-Cys52, Cys38-Cys57, and Cys42-Cys59.

As to expression, expressed by the venom gland.

The protein resides in the secreted. In terms of biological role, reversible blocker of both Kv1.3/KCNA3 potassium channels (high affinity) and Shaker B (mammalian Kv1.1 analog) potassium channels (very low affinity). This chain is Potassium channel toxin alpha-KTx 18.1, found in Tityus obscurus (Amazonian scorpion).